The primary structure comprises 362 residues: MKLSALLALSASTAVLAAPAVHHSDNHHHNDKRAVVTVTQYVNADGTVVIPAANTATSAAADGKVESVAAATTTLSSTAAAATTSAAASSSSSSSSSSSSVGSGDFEDGTISCSDFPSGQGAVSLDWLGLGGWASIMDMNGNTATSCQDGYYCSYACSPGYAKTQWPSEQPSDGRSVGGLYCKNGKLYRSNTDTNSLCVEGQGSAQAVNKVSGSIAICGTDYPGSENMVVPTVVGAGSSQPINVIKEDSYYQWQGKKTSAQYYVNNAGVSVEDGCIWGTEGSGVGNWAPVVLGAGYTDGITYLSIIPNPNNKEAPNFNIKIVATDGSTVNGACSYENGVYSGSGSDGCTVSVTSGSANFVFY.

Residues 1 to 17 (MKLSALLALSASTAVLA) form the signal peptide.

It belongs to the SUN family.

The protein localises to the mitochondrion outer membrane. It localises to the secreted. Its subcellular location is the cell wall. Functionally, involved in aging, oxidative stress response, and in the regulation of mitochondrial biogenesis. Inactivation of UTH1 increases life span, leads to higher resistance to heat stress and to hydrogen peroxide, and increases sensitivity to the superoxide radical-generating drug paraquat and to copper. Also required for the selective autophagic degradation of mitochondria (mitophagy) in response to nitrogen starvation. Involved in the remodeling of the cell wall during the various phases of yeast culture development and under various environmental conditions and plays a role in septation. Involved in cell sensitivity to boric acid. The protein is Probable secreted beta-glucosidase UTH1 (UTH1) of Saccharomyces cerevisiae (strain RM11-1a) (Baker's yeast).